The following is a 109-amino-acid chain: Protein reprimo (109 aa).

N-linked (GlcNAc...) asparagine glycans are attached at residues Asn-7 and Asn-18. A helical transmembrane segment spans residues 56-76 (VVQIAVMCVLSLTVVFGIFFL). Ser-98 bears the Phosphoserine mark.

This sequence belongs to the reprimo family.

Its subcellular location is the cytoplasm. The protein localises to the membrane. May be involved in the regulation of p53-dependent G2 arrest of the cell cycle. Seems to induce cell cycle arrest by inhibiting CDK1 activity and nuclear translocation of the CDC2 cyclin B1 complex. This chain is Protein reprimo (Rprm), found in Mus musculus (Mouse).